A 240-amino-acid chain; its full sequence is Large ribosomal subunit protein bL25 (240 aa).

Disordered regions lie at residues 1–20 (MAEN…GPAR) and 204–240 (GAAP…KAKK). Residues 204–229 (GAAPAAGAAAPAGGAAPAAGAAPAKG) show a composition bias toward low complexity. Positions 230 to 240 (GEAKGGDKAKK) are enriched in basic and acidic residues.

The protein belongs to the bacterial ribosomal protein bL25 family. CTC subfamily. As to quaternary structure, part of the 50S ribosomal subunit; part of the 5S rRNA/L5/L18/L25 subcomplex. Contacts the 5S rRNA. Binds to the 5S rRNA independently of L5 and L18.

In terms of biological role, this is one of the proteins that binds to the 5S RNA in the ribosome where it forms part of the central protuberance. The polypeptide is Large ribosomal subunit protein bL25 (Anaeromyxobacter sp. (strain K)).